The following is a 45-amino-acid chain: Small polypeptide DEVIL 23 (45 aa).

Residues 13–44 (KSTLRCWDWCKEQRTRAYIIWRCLIFLLRWDD) form a required for DVL/RTFL small polypeptide activity region. Residues 22–39 (CKEQRTRAYIIWRCLIFL) form a helical membrane-spanning segment.

The protein belongs to the DVL/RTFL small polypeptides family.

It localises to the cell membrane. Its function is as follows. Small polypeptide acting as a regulatory molecule which coordinates cellular responses required for differentiation, growth and development, probably by restricting polar cell proliferation in lateral organs and coordinating socket cell recruitment and differentiation at trichome sites. This Arabidopsis thaliana (Mouse-ear cress) protein is Small polypeptide DEVIL 23.